A 216-amino-acid chain; its full sequence is Adenylate kinase (216 aa).

10-15 lines the ATP pocket; it reads GAGKGT. Residues 30 to 59 are NMP; the sequence is STGDIFRAAIKNQTPMGVEAKKFIDKGELV. Residues T31, R36, 57–59, 85–88, and Q92 each bind AMP; these read ELV and GFPR. The LID stretch occupies residues 126-164; it reads GRFICRNCGTTYHRLYNPTKVEGTCDVCGGHDFYQRDDD. R127 is a binding site for ATP. Positions 130 and 133 each coordinate Zn(2+). An ATP-binding site is contributed by 136–137; it reads TY. Zn(2+) is bound by residues C150 and C153. The AMP site is built by R161 and R172. Q200 contacts ATP.

The protein belongs to the adenylate kinase family. Monomer.

It localises to the cytoplasm. The enzyme catalyses AMP + ATP = 2 ADP. The protein operates within purine metabolism; AMP biosynthesis via salvage pathway; AMP from ADP: step 1/1. Its function is as follows. Catalyzes the reversible transfer of the terminal phosphate group between ATP and AMP. Plays an important role in cellular energy homeostasis and in adenine nucleotide metabolism. The protein is Adenylate kinase of Limosilactobacillus fermentum (strain NBRC 3956 / LMG 18251) (Lactobacillus fermentum).